A 339-amino-acid chain; its full sequence is tRNA-dihydrouridine(20/20a) synthase (339 aa).

Residues 26–28 (PML) and Gln78 contribute to the FMN site. Cys108 (proton donor) is an active-site residue. FMN-binding positions include Lys147, His180, 220 to 222 (NGG), and 242 to 243 (GR).

This sequence belongs to the Dus family. DusA subfamily. FMN is required as a cofactor.

It carries out the reaction 5,6-dihydrouridine(20) in tRNA + NADP(+) = uridine(20) in tRNA + NADPH + H(+). The enzyme catalyses 5,6-dihydrouridine(20) in tRNA + NAD(+) = uridine(20) in tRNA + NADH + H(+). It catalyses the reaction 5,6-dihydrouridine(20a) in tRNA + NADP(+) = uridine(20a) in tRNA + NADPH + H(+). The catalysed reaction is 5,6-dihydrouridine(20a) in tRNA + NAD(+) = uridine(20a) in tRNA + NADH + H(+). In terms of biological role, catalyzes the synthesis of 5,6-dihydrouridine (D), a modified base found in the D-loop of most tRNAs, via the reduction of the C5-C6 double bond in target uridines. Specifically modifies U20 and U20a in tRNAs. The sequence is that of tRNA-dihydrouridine(20/20a) synthase from Shigella flexneri.